The chain runs to 361 residues: Probable galacturonosyltransferase-like 7 (361 aa).

The chain crosses the membrane as a helical; Signal-anchor for type II membrane protein span at residues 1–21 (MLWIMRFSGLFSAALVIIVLS). The Lumenal portion of the chain corresponds to 22–361 (PSLQSFPPAE…PYDLYGHYSR (340 aa)). Asparagine 217 is a glycosylation site (N-linked (GlcNAc...) asparagine).

Belongs to the glycosyltransferase 8 family.

Its subcellular location is the golgi apparatus membrane. Its pathway is glycan metabolism; pectin biosynthesis. Its function is as follows. May be involved in pectin and/or xylans biosynthesis in cell walls. The chain is Probable galacturonosyltransferase-like 7 (GATL7) from Arabidopsis thaliana (Mouse-ear cress).